A 207-amino-acid chain; its full sequence is Ribosomal RNA small subunit methyltransferase G (207 aa).

S-adenosyl-L-methionine is bound by residues Gly-73, Leu-78, 124 to 125 (VE), and Arg-139.

This sequence belongs to the methyltransferase superfamily. RNA methyltransferase RsmG family.

The protein resides in the cytoplasm. It carries out the reaction guanosine(527) in 16S rRNA + S-adenosyl-L-methionine = N(7)-methylguanosine(527) in 16S rRNA + S-adenosyl-L-homocysteine. In terms of biological role, specifically methylates the N7 position of guanine in position 527 of 16S rRNA. This Klebsiella pneumoniae (strain 342) protein is Ribosomal RNA small subunit methyltransferase G.